The primary structure comprises 92 residues: N(2)-fixation sustaining protein CowN (92 aa).

The protein belongs to the CowN family.

Its function is as follows. Is required to sustain N(2)-dependent growth in the presence of low levels of carbon monoxide (CO). Probably acts by protecting the N(2) fixation ability of the nitrogenase complex, which is inactivated in the presence of CO. The protein is N(2)-fixation sustaining protein CowN of Rhodopseudomonas palustris (strain HaA2).